The sequence spans 46 residues: Transcriptional regulator SEHBP (46 aa).

Interacts with histone H2B. Also interacts with chromatin-binding proteins HMGN1 and HMGN3.

It is found in the nucleus. It localises to the cytoplasm. Plays a role in transcription regulation. The polypeptide is Transcriptional regulator SEHBP (Homo sapiens (Human)).